A 160-amino-acid polypeptide reads, in one-letter code: Cyclic pyranopterin monophosphate synthase (160 aa).

Residues 74-76 (LSH) and 112-113 (ME) contribute to the substrate site. Aspartate 127 is an active-site residue.

The protein belongs to the MoaC family. Homohexamer; trimer of dimers.

It catalyses the reaction (8S)-3',8-cyclo-7,8-dihydroguanosine 5'-triphosphate = cyclic pyranopterin phosphate + diphosphate. It participates in cofactor biosynthesis; molybdopterin biosynthesis. In terms of biological role, catalyzes the conversion of (8S)-3',8-cyclo-7,8-dihydroguanosine 5'-triphosphate to cyclic pyranopterin monophosphate (cPMP). The polypeptide is Cyclic pyranopterin monophosphate synthase (Geobacter metallireducens (strain ATCC 53774 / DSM 7210 / GS-15)).